The sequence spans 508 residues: ATP synthase subunit alpha, chloroplastic (508 aa).

172–179 (GDRQTGKT) provides a ligand contact to ATP.

This sequence belongs to the ATPase alpha/beta chains family. F-type ATPases have 2 components, CF(1) - the catalytic core - and CF(0) - the membrane proton channel. CF(1) has five subunits: alpha(3), beta(3), gamma(1), delta(1), epsilon(1). CF(0) has four main subunits: a, b, b' and c.

It localises to the plastid. The protein localises to the chloroplast thylakoid membrane. It carries out the reaction ATP + H2O + 4 H(+)(in) = ADP + phosphate + 5 H(+)(out). Its function is as follows. Produces ATP from ADP in the presence of a proton gradient across the membrane. The alpha chain is a regulatory subunit. The sequence is that of ATP synthase subunit alpha, chloroplastic from Angiopteris evecta (Mule's foot fern).